A 299-amino-acid chain; its full sequence is Meso-diaminopimelate D-dehydrogenase (299 aa).

NADP(+) is bound by residues Y11–I14, R36, C67–T70, S90–D92, and A119–P123. Residues D92, D122, F146, M152 to G153, T171, R181, H227, and N253 each bind substrate.

This sequence belongs to the diaminopimelate dehydrogenase family. In terms of assembly, homodimer.

The catalysed reaction is meso-2,6-diaminopimelate + NADP(+) + H2O = (S)-2-amino-6-oxoheptanedioate + NH4(+) + NADPH + H(+). Its pathway is amino-acid biosynthesis; L-lysine biosynthesis via DAP pathway; DL-2,6-diaminopimelate from (S)-tetrahydrodipicolinate: step 1/1. Its function is as follows. Catalyzes the reversible NADPH-dependent reductive amination of L-2-amino-6-oxopimelate, the acyclic form of L-tetrahydrodipicolinate, to generate the meso compound, D,L-2,6-diaminopimelate. Probably plays a role in lysine biosynthesis. Exhibits a high substrate specificity for meso-2,6-diaminopimelate (m-DAP), since the activity with L,L-2,6-diaminopimelate is less than 5% of the activity observed with m-DAP. Can use NAD(+) only very poorly since the activity observed in the presence of NAD(+) is about 14% of that with NADP(+). This is Meso-diaminopimelate D-dehydrogenase (ddh) from Bacteroides fragilis (strain ATCC 25285 / DSM 2151 / CCUG 4856 / JCM 11019 / LMG 10263 / NCTC 9343 / Onslow / VPI 2553 / EN-2).